Here is a 58-residue protein sequence, read N- to C-terminus: Small ribosomal subunit protein uS14 (58 aa).

The tract at residues 1–21 is disordered; the sequence is MSESETEQTGEHASHRTGQTH. The segment covering 9–21 has biased composition (basic and acidic residues); it reads TGEHASHRTGQTH. Zn(2+) contacts are provided by Cys23, Cys26, Cys41, and Cys44.

Belongs to the universal ribosomal protein uS14 family. Zinc-binding uS14 subfamily. As to quaternary structure, part of the 30S ribosomal subunit. Zn(2+) serves as cofactor.

Its function is as follows. Binds 16S rRNA, required for the assembly of 30S particles. The protein is Small ribosomal subunit protein uS14 of Haloquadratum walsbyi (strain DSM 16790 / HBSQ001).